The chain runs to 500 residues: Aspartyl/glutamyl-tRNA(Asn/Gln) amidotransferase subunit B (500 aa).

It belongs to the GatB/GatE family. GatB subfamily. In terms of assembly, heterotrimer of A, B and C subunits.

The catalysed reaction is L-glutamyl-tRNA(Gln) + L-glutamine + ATP + H2O = L-glutaminyl-tRNA(Gln) + L-glutamate + ADP + phosphate + H(+). It carries out the reaction L-aspartyl-tRNA(Asn) + L-glutamine + ATP + H2O = L-asparaginyl-tRNA(Asn) + L-glutamate + ADP + phosphate + 2 H(+). Its function is as follows. Allows the formation of correctly charged Asn-tRNA(Asn) or Gln-tRNA(Gln) through the transamidation of misacylated Asp-tRNA(Asn) or Glu-tRNA(Gln) in organisms which lack either or both of asparaginyl-tRNA or glutaminyl-tRNA synthetases. The reaction takes place in the presence of glutamine and ATP through an activated phospho-Asp-tRNA(Asn) or phospho-Glu-tRNA(Gln). This chain is Aspartyl/glutamyl-tRNA(Asn/Gln) amidotransferase subunit B, found in Clavibacter sepedonicus (Clavibacter michiganensis subsp. sepedonicus).